The sequence spans 520 residues: Laccase-4 (520 aa).

A signal peptide spans Met1–Gly18. Plastocyanin-like domains lie at Ile24 to Tyr149, Val161 to Tyr303, and Thr370 to Asp491. Asn73 and Asn76 each carry an N-linked (GlcNAc...) asparagine glycan. Cu cation-binding residues include His86, His88, His131, and His133. Cystine bridges form between Cys107–Cys509 and Cys139–Cys227. N-linked (GlcNAc...) asparagine glycans are attached at residues Asn239 and Asn399. His418, His421, His423, His473, Cys474, His475, and His479 together coordinate Cu cation. An N-linked (GlcNAc...) asparagine glycan is attached at Asn497.

Belongs to the multicopper oxidase family. In terms of assembly, homodimer. The cofactor is Cu cation.

It localises to the secreted. It carries out the reaction 4 hydroquinone + O2 = 4 benzosemiquinone + 2 H2O. Its function is as follows. Lignin degradation and detoxification of lignin-derived products. This is Laccase-4 (LCC4) from Trametes villosa (White-rot fungus).